The primary structure comprises 102 residues: Apolipoprotein A-II (102 aa).

The signal sequence occupies residues 1 to 18; the sequence is MKLLAMVALLVTICSLEG. Met49 is modified (methionine sulfoxide).

This sequence belongs to the apolipoprotein A2 family. As to quaternary structure, monomer. Interacts with NAXE and NDRG1. As to expression, plasma.

Its subcellular location is the secreted. May stabilize HDL (high density lipoprotein) structure by its association with lipids, and affect the HDL metabolism. The chain is Apolipoprotein A-II (Apoa2) from Rattus norvegicus (Rat).